A 359-amino-acid chain; its full sequence is Endosome-associated-trafficking regulator 1 (359 aa).

A phosphoserine mark is found at Ser-18 and Ser-74. Positions 100 to 125 (LLDEDEDEEDGWNGAYLPSAMEQTHS) are required for interaction with PTPN13. Residues 153–180 (SLPPWTLSDSDSRISPTGSPSADFTAHG) are disordered. Polar residues predominate over residues 159–174 (LSDSDSRISPTGSPSA). Phosphoserine is present on residues Ser-167 and Ser-171. Residues 185–295 (DRHLRTLQIS…FKRENEALRS (111 aa)) adopt a coiled-coil conformation.

The protein belongs to the ENTR1 family. In terms of assembly, found in a complex with ENTR1, PTPN13 and GIT1. Interacts with PTPN13 (via the FERM domain). Interacts (via N-terminus) with GIT1 (via N- and C-terminus); this interaction is direct. Interacts with NOD2. Interacts (via N-terminus) with IFT88. Interacts with VPS35. Post-translationally, phosphorylated.

The protein localises to the cytoplasm. It localises to the early endosome. Its subcellular location is the endosome. The protein resides in the recycling endosome. It is found in the midbody. The protein localises to the cytoskeleton. It localises to the microtubule organizing center. Its subcellular location is the centrosome. The protein resides in the cilium basal body. Endosome-associated protein that plays a role in membrane receptor sorting, cytokinesis and ciliogenesis. Involved in the endosome-to-plasma membrane trafficking and recycling of SNX27-retromer-dependent cargo proteins, such as GLUT1. Involved in the regulation of cytokinesis; the function may involve PTPN13 and GIT1. Plays a role in the formation of cilia. Involved in cargo protein localization, such as PKD2, at primary cilia. Involved in the presentation of the tumor necrosis factor (TNF) receptor TNFRSF1A on the cell surface, and hence in the modulation of the TNF-induced apoptosis. The polypeptide is Endosome-associated-trafficking regulator 1 (Bos taurus (Bovine)).